Here is a 141-residue protein sequence, read N- to C-terminus: Large ribosomal subunit protein uL11 (141 aa).

The protein belongs to the universal ribosomal protein uL11 family. As to quaternary structure, part of the ribosomal stalk of the 50S ribosomal subunit. Interacts with L10 and the large rRNA to form the base of the stalk. L10 forms an elongated spine to which L12 dimers bind in a sequential fashion forming a multimeric L10(L12)X complex. In terms of processing, one or more lysine residues are methylated.

In terms of biological role, forms part of the ribosomal stalk which helps the ribosome interact with GTP-bound translation factors. The sequence is that of Large ribosomal subunit protein uL11 from Coprothermobacter proteolyticus (strain ATCC 35245 / DSM 5265 / OCM 4 / BT).